We begin with the raw amino-acid sequence, 769 residues long: Non-secreted LysM effector LysM17 (769 aa).

A helical transmembrane segment spans residues 173 to 193; the sequence is LPPLATAIPLAVVWASLASVI. N-linked (GlcNAc...) asparagine glycans are attached at residues asparagine 305, asparagine 368, asparagine 423, and asparagine 452. LysM domains follow at residues 498–543 and 562–610; these read RTIQ…HVCC and YSNL…KICL. N-linked (GlcNAc...) asparagine glycans are attached at residues asparagine 631, asparagine 671, asparagine 706, and asparagine 734.

This sequence belongs to the secreted LysM effector family.

The protein resides in the membrane. Non-secreted LysM effector that might be involved in manipulation of host defenses for successful infection. The polypeptide is Non-secreted LysM effector LysM17 (Penicillium expansum (Blue mold rot fungus)).